Reading from the N-terminus, the 1342-residue chain is WD repeat-containing protein 19 (1342 aa).

6 WD repeats span residues 11 to 51, 52 to 92, 95 to 134, 137 to 175, 273 to 311, and 317 to 356; these read TWLG…RSEI, NLPG…TSQL, GMRDQMSFLLWSKVGSFLAVGTVKGNLLIYNHQTSRKIPV, KHTKRITCGCWNAENLLALGGEDKMITVSNQEGDTIRQT, NHKDNLTSIAVSQTLNKVATCGDNCIKIQDLVDLKDMYV, and EENKGLGTLSWTDDGQLLALSTQRGSLHVFLTKLPILGDA. TPR repeat units lie at residues 736–769, 775–808, 840–873, 895–928, 951–984, and 1020–1053; these read AQDLYLASSCPIAALEMRRDLQHWDSALQLAKHL, PFISKEYAIQLEFAGDYVNALAHYEKGITGDNKE, RVLKRDCGAILENMKQFSEAAQLYEKGLYYDKAA, PKIHLQYAKAKEADGRYKEAVVAYENAKQWQSVI, LDGAKMVARFFLQLGDYGSAIQFLVMSKCNNEAF, and EKRYLQAGKFFLLCGQYSRALKHFLKCPSSEDNV.

Component of the IFT complex A (IFT-A) complex. IFT-A complex is divided into a core subcomplex composed of IFT122:IFT140:WDR19 which is associated with TULP3 and a peripheral subcomplex composed of IFT43:WDR35:TTC21B. Interacts (via C-terminal region) with IFT122 (via C-terminal region). Interacts with BBS1. Interacts with TTC25. Some isoforms are tissue-specific. Highly expressed in the prostate. Lower expression in the cerebellum, pituitary gland, fetal lung, and pancreas. In normal prostate, expressed in both basal and luminal epithelial cells. No expression detected in fibromuscular stromal cells, endothelial cells, or infiltrating lymphocytes. Uniformed expression in prostate adenocarcinoma cells.

The protein resides in the cell projection. The protein localises to the cilium. It is found in the cytoplasm. It localises to the cytoskeleton. Its subcellular location is the cilium basal body. The protein resides in the photoreceptor outer segment. The protein localises to the flagellum. Its function is as follows. As component of the IFT complex A (IFT-A), a complex required for retrograde ciliary transport and entry into cilia of G protein-coupled receptors (GPCRs), it is involved in cilia function and/or assembly. Essential for functional IFT-A assembly and ciliary entry of GPCRs. Associates with the BBSome complex to mediate ciliary transport. This is WD repeat-containing protein 19 from Homo sapiens (Human).